A 234-amino-acid polypeptide reads, in one-letter code: Peptidase E (234 aa).

Catalysis depends on charge relay system residues Ser-123, Asp-138, and His-160.

The protein belongs to the peptidase S51 family.

The protein localises to the cytoplasm. The enzyme catalyses Dipeptidase E catalyzes the hydrolysis of dipeptides Asp-|-Xaa. It does not act on peptides with N-terminal Glu, Asn or Gln, nor does it cleave isoaspartyl peptides.. Functionally, hydrolyzes dipeptides containing N-terminal aspartate residues. May play a role in allowing the cell to use peptide aspartate to spare carbon otherwise required for the synthesis of the aspartate family of amino acids. The chain is Peptidase E from Haemophilus influenzae (strain PittGG).